Reading from the N-terminus, the 509-residue chain is Galactose-1-phosphate uridylyltransferase (509 aa).

This sequence belongs to the galactose-1-phosphate uridylyltransferase type 2 family.

Its subcellular location is the cytoplasm. It catalyses the reaction alpha-D-galactose 1-phosphate + UDP-alpha-D-glucose = alpha-D-glucose 1-phosphate + UDP-alpha-D-galactose. The protein operates within carbohydrate metabolism; galactose metabolism. The polypeptide is Galactose-1-phosphate uridylyltransferase (Fusobacterium nucleatum subsp. nucleatum (strain ATCC 25586 / DSM 15643 / BCRC 10681 / CIP 101130 / JCM 8532 / KCTC 2640 / LMG 13131 / VPI 4355)).